A 612-amino-acid chain; its full sequence is Dihydroxy-acid dehydratase (612 aa).

A Mg(2+)-binding site is contributed by Asp-81. Position 122 (Cys-122) interacts with [2Fe-2S] cluster. Mg(2+)-binding residues include Asp-123 and Lys-124. Residue Lys-124 is modified to N6-carboxylysine. Cys-195 contacts [2Fe-2S] cluster. Glu-491 provides a ligand contact to Mg(2+). Residue Ser-517 is the Proton acceptor of the active site.

This sequence belongs to the IlvD/Edd family. As to quaternary structure, homodimer. The cofactor is [2Fe-2S] cluster. Requires Mg(2+) as cofactor.

The catalysed reaction is (2R)-2,3-dihydroxy-3-methylbutanoate = 3-methyl-2-oxobutanoate + H2O. The enzyme catalyses (2R,3R)-2,3-dihydroxy-3-methylpentanoate = (S)-3-methyl-2-oxopentanoate + H2O. The protein operates within amino-acid biosynthesis; L-isoleucine biosynthesis; L-isoleucine from 2-oxobutanoate: step 3/4. It functions in the pathway amino-acid biosynthesis; L-valine biosynthesis; L-valine from pyruvate: step 3/4. Functionally, functions in the biosynthesis of branched-chain amino acids. Catalyzes the dehydration of (2R,3R)-2,3-dihydroxy-3-methylpentanoate (2,3-dihydroxy-3-methylvalerate) into 2-oxo-3-methylpentanoate (2-oxo-3-methylvalerate) and of (2R)-2,3-dihydroxy-3-methylbutanoate (2,3-dihydroxyisovalerate) into 2-oxo-3-methylbutanoate (2-oxoisovalerate), the penultimate precursor to L-isoleucine and L-valine, respectively. The sequence is that of Dihydroxy-acid dehydratase from Rhizobium etli (strain CIAT 652).